Reading from the N-terminus, the 91-residue chain is Putative defensin-like protein 145 (91 aa).

A signal peptide spans 1-26; the sequence is MNKNIIFSFTVLTLFVIFVQVTGVIG. N-linked (GlcNAc...) asparagine glycans are attached at residues Asn35 and Asn68. 4 cysteine pairs are disulfide-bonded: Cys39–Cys84, Cys52–Cys74, Cys57–Cys78, and Cys61–Cys80.

The protein belongs to the DEFL family.

It is found in the secreted. The protein is Putative defensin-like protein 145 (LCR2) of Arabidopsis thaliana (Mouse-ear cress).